The following is a 187-amino-acid chain: UPF0200 protein APE_1753.1 (187 aa).

13 to 20 is a binding site for ATP; that stretch reads GLPGSGKS.

This sequence belongs to the UPF0200 family.

This is UPF0200 protein APE_1753.1 from Aeropyrum pernix (strain ATCC 700893 / DSM 11879 / JCM 9820 / NBRC 100138 / K1).